A 173-amino-acid polypeptide reads, in one-letter code: Alpha-crystallin A chain (173 aa).

The residue at position 1 (Met1) is an N-acetylmethionine. A sHSP domain is found at 52–162; sequence LFRGFMDSGI…SHSERPIPVS (111 aa). Residues His100, Glu102, His107, and His154 each contribute to the Zn(2+) site. The tract at residues 146–173 is disordered; that stretch reads MMSGLDSSHSERPIPVSREEKPTSAPSS. Basic and acidic residues predominate over residues 153-167; the sequence is SHSERPIPVSREEKP.

It belongs to the small heat shock protein (HSP20) family. Heteropolymer composed of three CRYAA and one CRYAB subunits. Inter-subunit bridging via zinc ions enhances stability, which is crucial as there is no protein turn over in the lens. Can also form homodimers and homotetramers (dimers of dimers) which serve as the building blocks of homooligomers. Within homooligomers, the zinc-binding motif is created from residues of 3 different molecules. His-100 and Glu-102 from one molecule are ligands of the zinc ion, and His-107 and His-154 residues from additional molecules complete the site with tetrahedral coordination geometry.

Its subcellular location is the cytoplasm. The protein resides in the nucleus. Functionally, contributes to the transparency and refractive index of the lens. May act as a chaperone, preventing aggregation of various proteins under a wide range of stress conditions. The chain is Alpha-crystallin A chain (CRYAA) from Aquarana catesbeiana (American bullfrog).